The sequence spans 337 residues: DNA-directed RNA polymerase subunit alpha (337 aa).

The interval 1 to 233 (MVREEVAVST…DLFIPFLHAE (233 aa)) is alpha N-terminal domain (alpha-NTD). The tract at residues 266–337 (GIALKCIFID…FTIDLPKNKF (72 aa)) is alpha C-terminal domain (alpha-CTD).

It belongs to the RNA polymerase alpha chain family. As to quaternary structure, in plastids the minimal PEP RNA polymerase catalytic core is composed of four subunits: alpha, beta, beta', and beta''. When a (nuclear-encoded) sigma factor is associated with the core the holoenzyme is formed, which can initiate transcription.

The protein localises to the plastid. The protein resides in the chloroplast. It catalyses the reaction RNA(n) + a ribonucleoside 5'-triphosphate = RNA(n+1) + diphosphate. In terms of biological role, DNA-dependent RNA polymerase catalyzes the transcription of DNA into RNA using the four ribonucleoside triphosphates as substrates. The sequence is that of DNA-directed RNA polymerase subunit alpha from Liriodendron tulipifera (Tuliptree).